The following is a 122-amino-acid chain: Basic phospholipase A2 Cdr-13 (122 aa).

Intrachain disulfides connect Cys-26/Cys-115, Cys-28/Cys-44, Cys-43/Cys-95, Cys-49/Cys-122, Cys-50/Cys-88, Cys-57/Cys-81, and Cys-75/Cys-86. Ca(2+)-binding residues include Tyr-27, Gly-29, and Gly-31. Residue His-47 is part of the active site. Residue Asp-48 participates in Ca(2+) binding. Asp-89 is a catalytic residue.

Requires Ca(2+) as cofactor. As to expression, expressed by the venom gland.

The protein resides in the secreted. The catalysed reaction is a 1,2-diacyl-sn-glycero-3-phosphocholine + H2O = a 1-acyl-sn-glycero-3-phosphocholine + a fatty acid + H(+). In terms of biological role, snake venom phospholipase A2 (PLA2) that induces myonecrosis and edema upon subcutaneous injections in mice. In vitro, causes a potent blockade of neuromuscular transmission in young chicken biventer cervicis preparation and produces cytotoxicity in murine C2C12 skeletal muscle myotubes and lack cytolytic activity upon myoblasts in vitro. PLA2 catalyzes the calcium-dependent hydrolysis of the 2-acyl groups in 3-sn-phosphoglycerides. This Crotalus durissus ruruima (South American rattlesnake) protein is Basic phospholipase A2 Cdr-13.